Here is a 161-residue protein sequence, read N- to C-terminus: Cyclic pyranopterin monophosphate synthase (161 aa).

Substrate is bound by residues 75–77 (MCH) and 115–116 (ME). Aspartate 130 is an active-site residue.

Belongs to the MoaC family. As to quaternary structure, homohexamer; trimer of dimers.

The catalysed reaction is (8S)-3',8-cyclo-7,8-dihydroguanosine 5'-triphosphate = cyclic pyranopterin phosphate + diphosphate. It participates in cofactor biosynthesis; molybdopterin biosynthesis. Its function is as follows. Catalyzes the conversion of (8S)-3',8-cyclo-7,8-dihydroguanosine 5'-triphosphate to cyclic pyranopterin monophosphate (cPMP). The chain is Cyclic pyranopterin monophosphate synthase from Bacillus mycoides (strain KBAB4) (Bacillus weihenstephanensis).